The chain runs to 207 residues: Large ribosomal subunit protein uL4 (207 aa).

Residues 44 to 78 (LRQGTHKTKTRSEVRGGGRKPWRQKGTGRARQGSI) form a disordered region. A compositionally biased stretch (basic residues) spans 60–71 (GGRKPWRQKGTG).

The protein belongs to the universal ribosomal protein uL4 family. In terms of assembly, part of the 50S ribosomal subunit.

Its function is as follows. One of the primary rRNA binding proteins, this protein initially binds near the 5'-end of the 23S rRNA. It is important during the early stages of 50S assembly. It makes multiple contacts with different domains of the 23S rRNA in the assembled 50S subunit and ribosome. Forms part of the polypeptide exit tunnel. The protein is Large ribosomal subunit protein uL4 of Halalkalibacterium halodurans (strain ATCC BAA-125 / DSM 18197 / FERM 7344 / JCM 9153 / C-125) (Bacillus halodurans).